We begin with the raw amino-acid sequence, 161 residues long: EP300-interacting inhibitor of differentiation 2B (161 aa).

2 disordered regions span residues 1 to 26 (MAEPTGLLEMSELPGDSSVPQVGTAS) and 54 to 77 (ARSMARMPGPVPGPIPSSVPGLAS).

As to quaternary structure, homodimer and heterodimer with EID2. Interacts with HDAC1 and HDAC2.

It is found in the nucleus. Its function is as follows. Acts as a repressor of MYOD-dependent transcription, glucocorticoid receptor-dependent transcription, and muscle differentiation. This is EP300-interacting inhibitor of differentiation 2B from Homo sapiens (Human).